Here is a 289-residue protein sequence, read N- to C-terminus: tRNA pseudouridine synthase B (289 aa).

D38 functions as the Nucleophile in the catalytic mechanism.

The protein belongs to the pseudouridine synthase TruB family. Type 1 subfamily.

It carries out the reaction uridine(55) in tRNA = pseudouridine(55) in tRNA. In terms of biological role, responsible for synthesis of pseudouridine from uracil-55 in the psi GC loop of transfer RNAs. In Clostridium kluyveri (strain ATCC 8527 / DSM 555 / NBRC 12016 / NCIMB 10680 / K1), this protein is tRNA pseudouridine synthase B.